A 96-amino-acid chain; its full sequence is Co-chaperonin GroES (96 aa).

It belongs to the GroES chaperonin family. As to quaternary structure, heptamer of 7 subunits arranged in a ring. Interacts with the chaperonin GroEL.

The protein localises to the cytoplasm. In terms of biological role, together with the chaperonin GroEL, plays an essential role in assisting protein folding. The GroEL-GroES system forms a nano-cage that allows encapsulation of the non-native substrate proteins and provides a physical environment optimized to promote and accelerate protein folding. GroES binds to the apical surface of the GroEL ring, thereby capping the opening of the GroEL channel. The protein is Co-chaperonin GroES of Nitrosospira multiformis (strain ATCC 25196 / NCIMB 11849 / C 71).